Reading from the N-terminus, the 472-residue chain is Phosphoenolpyruvate carboxylase (472 aa).

It belongs to the PEPCase type 2 family. Homotetramer. Mg(2+) is required as a cofactor.

The catalysed reaction is oxaloacetate + phosphate = phosphoenolpyruvate + hydrogencarbonate. Functionally, catalyzes the irreversible beta-carboxylation of phosphoenolpyruvate (PEP) to form oxaloacetate (OAA), a four-carbon dicarboxylic acid source for the tricarboxylic acid cycle. In Pyrococcus furiosus (strain ATCC 43587 / DSM 3638 / JCM 8422 / Vc1), this protein is Phosphoenolpyruvate carboxylase.